Reading from the N-terminus, the 365-residue chain is Phenoloxidase-activating factor 1 (365 aa).

Positions 1 to 23 are cleaved as a signal peptide; it reads MKQVHFFILWFFVLNLYSIKAQA. A Clip domain is found at 24–74; the sequence is GCRTPNGENARCVPINNCKILYDSVLTSDPEVIRFLRASQCGYNGQPLVCC. Intrachain disulfides connect Cys25/Cys73, Cys35/Cys64, Cys41/Cys74, Cys101/Cys240, Cys140/Cys156, Cys184/Cys191, Cys284/Cys301, and Cys311/Cys340. The 255-residue stretch at 110–364 folds into the Peptidase S1 domain; it reads ILNGDDTVPE…YRDWIEGNIR (255 aa). N-linked (GlcNAc...) asparagine glycosylation is present at Asn131. Catalysis depends on His155, which acts as the Charge relay system. Residues Glu175, Asn177, Thr180, and Asp183 each contribute to the Ca(2+) site. Asp220 acts as the Charge relay system in catalysis. The active-site Charge relay system is Ser315.

The protein belongs to the peptidase S1 family. CLIP subfamily. In the active form, heterodimer of a light chain and a heavy chain; disulfide-linked. Post-translationally, cleaved following the recognition of pathogen-derived products, probably by a lysyl endopeptidase.

It is found in the secreted. Its activity is regulated as follows. Protein stability and endopeptidase activity are calcium dependent. First cleavage on prophenoloxidase PPO1 and PPO2 is not dependent on calcium; however, cleavage of PPO1 and PPO2 to their active forms is dependent on calcium and on the presence of PPAF2 and PPAF3. Cleavage of PPAF2 is inhibited by calcium. Inhibited by ethylenediaminetetraacetic acid (EDTA), p-nitrophenyl-p'-guanido-benzoate, diisopropylphosphorofluoridate (iPr2PF) and p-(Amidinophenyl)methanesulfonyl fluoride (p-APMSF). Serine endopeptidase which, by cleaving prophenoloxidase PPO1 and PPO2, is required for the activation of the prophenoloxidase cascade probably following the recognition of pathogen-derived products. The chain is Phenoloxidase-activating factor 1 from Holotrichia diomphalia (Korean black chafer).